The chain runs to 467 residues: Uronate isomerase (467 aa).

The protein belongs to the metallo-dependent hydrolases superfamily. Uronate isomerase family.

The enzyme catalyses D-glucuronate = D-fructuronate. It catalyses the reaction aldehydo-D-galacturonate = keto-D-tagaturonate. It participates in carbohydrate metabolism; pentose and glucuronate interconversion. This Mannheimia succiniciproducens (strain KCTC 0769BP / MBEL55E) protein is Uronate isomerase.